A 220-amino-acid chain; its full sequence is Adenylate kinase (220 aa).

An ATP-binding site is contributed by Gly-10 to Thr-15. The interval Ser-30–Val-59 is NMP. AMP is bound by residues Thr-31, Arg-36, Lys-57 to Val-59, Gly-85 to Arg-88, and Gln-92. Residues Gly-122–Asp-159 form an LID region. Residues Arg-123 and Thr-132–Tyr-133 each bind ATP. Arg-156 and Arg-167 together coordinate AMP. Position 206 (Gly-206) interacts with ATP.

It belongs to the adenylate kinase family. In terms of assembly, monomer.

The protein localises to the cytoplasm. It catalyses the reaction AMP + ATP = 2 ADP. The protein operates within purine metabolism; AMP biosynthesis via salvage pathway; AMP from ADP: step 1/1. In terms of biological role, catalyzes the reversible transfer of the terminal phosphate group between ATP and AMP. Plays an important role in cellular energy homeostasis and in adenine nucleotide metabolism. The polypeptide is Adenylate kinase (Burkholderia multivorans (strain ATCC 17616 / 249)).